Reading from the N-terminus, the 235-residue chain is Small ribosomal subunit protein uS3 (235 aa).

The KH type-2 domain maps to 39–107 (VRKFLNKELA…PAQINIAEVK (69 aa)).

It belongs to the universal ribosomal protein uS3 family. Part of the 30S ribosomal subunit. Forms a tight complex with proteins S10 and S14.

Functionally, binds the lower part of the 30S subunit head. Binds mRNA in the 70S ribosome, positioning it for translation. In Actinobacillus pleuropneumoniae serotype 5b (strain L20), this protein is Small ribosomal subunit protein uS3.